The chain runs to 141 residues: Large ribosomal subunit protein uL13 (141 aa).

The protein belongs to the universal ribosomal protein uL13 family. In terms of assembly, part of the 50S ribosomal subunit.

In terms of biological role, this protein is one of the early assembly proteins of the 50S ribosomal subunit, although it is not seen to bind rRNA by itself. It is important during the early stages of 50S assembly. The protein is Large ribosomal subunit protein uL13 of Helicobacter pylori (strain G27).